A 263-amino-acid chain; its full sequence is Probable 6-oxopurine nucleoside phosphorylase (263 aa).

Phosphate contacts are provided by residues T9, 49–50 (RH), and 82–83 (TA). M181 contributes to the substrate binding site. T182 contacts phosphate. Residue 205 to 207 (NYA) participates in substrate binding.

Belongs to the PNP/MTAP phosphorylase family. MTAP subfamily. Homohexamer. Dimer of a homotrimer.

It catalyses the reaction a purine D-ribonucleoside + phosphate = a purine nucleobase + alpha-D-ribose 1-phosphate. It functions in the pathway purine metabolism; purine nucleoside salvage. Its function is as follows. Purine nucleoside phosphorylase which is highly specific for 6-oxopurine nucleosides. Cleaves guanosine or inosine to respective bases and sugar-1-phosphate molecules. Involved in purine salvage. The polypeptide is Probable 6-oxopurine nucleoside phosphorylase (Dictyoglomus turgidum (strain DSM 6724 / Z-1310)).